Consider the following 430-residue polypeptide: Enolase (430 aa).

Glutamine 163 is a binding site for (2R)-2-phosphoglycerate. Glutamate 205 (proton donor) is an active-site residue. 3 residues coordinate Mg(2+): aspartate 242, glutamate 287, and aspartate 314. 4 residues coordinate (2R)-2-phosphoglycerate: lysine 339, arginine 368, serine 369, and lysine 390. Lysine 339 (proton acceptor) is an active-site residue.

This sequence belongs to the enolase family. Requires Mg(2+) as cofactor.

It localises to the cytoplasm. The protein resides in the secreted. It is found in the cell surface. The enzyme catalyses (2R)-2-phosphoglycerate = phosphoenolpyruvate + H2O. The protein operates within carbohydrate degradation; glycolysis; pyruvate from D-glyceraldehyde 3-phosphate: step 4/5. Its function is as follows. Catalyzes the reversible conversion of 2-phosphoglycerate (2-PG) into phosphoenolpyruvate (PEP). It is essential for the degradation of carbohydrates via glycolysis. This Bacillus velezensis (strain DSM 23117 / BGSC 10A6 / LMG 26770 / FZB42) (Bacillus amyloliquefaciens subsp. plantarum) protein is Enolase.